A 161-amino-acid polypeptide reads, in one-letter code: Nucleotide-binding protein Spea_3114 (161 aa).

This sequence belongs to the YajQ family.

Its function is as follows. Nucleotide-binding protein. This chain is Nucleotide-binding protein Spea_3114, found in Shewanella pealeana (strain ATCC 700345 / ANG-SQ1).